Reading from the N-terminus, the 121-residue chain is Large ribosomal subunit protein uL14c (121 aa).

It belongs to the universal ribosomal protein uL14 family. In terms of assembly, part of the 50S ribosomal subunit.

Its subcellular location is the plastid. The protein localises to the chloroplast. In terms of biological role, binds to 23S rRNA. This is Large ribosomal subunit protein uL14c from Nephroselmis olivacea (Green alga).